We begin with the raw amino-acid sequence, 3122 residues long: Laminin subunit alpha-2 (3122 aa).

The signal sequence occupies residues 1–22 (MPGAAGVLLLLLLSGGLGGVQA). A Laminin N-terminal domain is found at 35-286 (QQRGLFPAVL…SVKDISVGGM (252 aa)). Residues N55 and N89 are each glycosylated (N-linked (GlcNAc...) asparagine). 6 disulfides stabilise this stretch: C287–C296, C289–C307, C309–C318, C321–C341, C344–C353, and C346–C378. Laminin EGF-like domains are found at residues 287-343 (CICY…ECEA), 344-413 (CNCH…PCQP), 414-468 (CHCD…DCKA), and 469-517 (CNCS…GCDE). N303 is a glycosylation site (N-linked (GlcNAc...) asparagine). N-linked (GlcNAc...) asparagine glycosylation is found at N363 and N380. 10 disulfides stabilise this stretch: C381–C390, C393–C411, C414–C426, C416–C442, C444–C453, C456–C466, C469–C482, C471–C486, C488–C497, and C500–C515. A glycan (N-linked (GlcNAc...) asparagine) is linked at N470. Residues 518 to 527 (CFCSGVSNRC) form the Laminin EGF-like 5; first part domain. Positions 531-723 (YWTYGKIQDM…DGSIAAAVEV (193 aa)) constitute a Laminin IV type A 1 domain. Positions 724 to 756 (CQCPPGYTGSSCESCWPRHRRVNGTIFGGICEP) constitute a Laminin EGF-like 5; second part domain. Residue N746 is glycosylated (N-linked (GlcNAc...) asparagine). Cystine bridges form between C757/C766, C759/C773, C776/C785, C788/C804, C807/C822, C809/C832, C835/C844, C847/C862, C865/C879, C867/C886, C889/C898, C901/C915, C918/C930, C920/C937, C939/C948, C951/C964, C967/C979, C969/C985, C987/C996, C999/C1011, C1014/C1023, C1016/C1030, C1032/C1041, C1044/C1057, C1060/C1072, C1062/C1079, C1081/C1090, C1093/C1103, C1106/C1118, C1108/C1134, C1136/C1145, and C1148/C1163. Laminin EGF-like domains lie at 757 to 806 (CQCF…DCQP), 807 to 864 (CACP…SCQP), 865 to 917 (CQCN…NCQP), 918 to 966 (CRCN…GCVP), 967 to 1013 (CNCN…GCTA), 1014 to 1059 (CECS…GCKA), 1060 to 1105 (CNCS…RCNL), and 1106 to 1165 (CDCF…GCSS). N1061 is a glycosylation site (N-linked (GlcNAc...) asparagine). Positions 1166–1175 (CYCFGTTTQC) constitute a Laminin EGF-like 14; first part domain. Residues 1176–1379 (SEAKGLIRTW…MTPPADLIEK (204 aa)) form the Laminin IV type A 2 domain. The Laminin EGF-like 14; second part domain maps to 1380–1419 (CDCPLGYSGLSCEACLPGFYRLRSQPGGRTPGPTLGTCVP). 12 cysteine pairs are disulfide-bonded: C1420/C1429, C1422/C1436, C1439/C1448, C1451/C1466, C1469/C1484, C1471/C1494, C1497/C1506, C1509/C1524, C1527/C1539, C1529/C1546, C1548/C1557, and C1560/C1571. 3 consecutive Laminin EGF-like domains span residues 1420-1468 (CQCN…DCQQ), 1469-1526 (CACP…SCQE), and 1527-1573 (CECD…ECVF). The tract at residues 1574 to 2144 (CGDECTGLLL…NQARKQANSI (571 aa)) is domain II and I. N-linked (GlcNAc...) asparagine glycosylation is found at N1597, N1614, N1700, N1810, N1901, N1916, N1920, N2017, N2028, N2045, N2126, and N2240. Residues 1630–2150 (ERLIQLAEGN…ANSIKVSVSS (521 aa)) are a coiled coil. 5 Laminin G-like domains span residues 2145 to 2328 (KVSV…CKGC), 2340 to 2521 (TIQF…TKGC), 2526 to 2710 (VYTV…IGRC), 2763 to 2934 (SKQF…VGTC), and 2939 to 3110 (QRGT…KALE). C2302 and C2328 are oxidised to a cystine. N-linked (GlcNAc...) asparagine glycans are attached at residues N2360, N2435, and N2478. A disulfide bridge connects residues C2495 and C2521. N-linked (GlcNAc...) asparagine glycosylation is found at N2551, N2558, and N2648. Residues C2683 and C2710 are joined by a disulfide bond. 2 N-linked (GlcNAc...) asparagine glycosylation sites follow: N2868 and N2893. Cysteines 2909 and 2934 form a disulfide. A compositionally biased stretch (polar residues) spans 3043 to 3060 (GNQVEAQSPNPASTSADT). Residues 3043 to 3063 (GNQVEAQSPNPASTSADTNDP) form a disordered region.

In terms of assembly, laminin is a complex glycoprotein, consisting of three different polypeptide chains (alpha, beta, gamma), which are bound to each other by disulfide bonds into a cross-shaped molecule comprising one long and three short arms with globules at each end. Alpha-2 is a subunit of laminin-2 (laminin-211 or merosin), laminin-4 (laminin-221 or S-merosin) and laminin-12 (laminin-213). Interacts with FBLN1, FBLN2 and NID2. As to expression, placenta, striated muscle, peripheral nerve, cardiac muscle, pancreas, lung, spleen, kidney, adrenal gland, skin, testis, meninges, choroid plexus, and some other regions of the brain; not in liver, thymus and bone.

The protein resides in the secreted. Its subcellular location is the extracellular space. It is found in the extracellular matrix. The protein localises to the basement membrane. Binding to cells via a high affinity receptor, laminin is thought to mediate the attachment, migration and organization of cells into tissues during embryonic development by interacting with other extracellular matrix components. The polypeptide is Laminin subunit alpha-2 (LAMA2) (Homo sapiens (Human)).